We begin with the raw amino-acid sequence, 144 residues long: Superoxide dismutase [Mn], mitochondrial (144 aa).

Mn(2+)-binding residues include H10, H58, and D143.

The protein belongs to the iron/manganese superoxide dismutase family. As to quaternary structure, homotetramer. Requires Mn(2+) as cofactor.

Its subcellular location is the mitochondrion matrix. The catalysed reaction is 2 superoxide + 2 H(+) = H2O2 + O2. In terms of biological role, destroys superoxide anion radicals which are normally produced within the cells and which are toxic to biological systems. This Eptatretus stoutii (Pacific hagfish) protein is Superoxide dismutase [Mn], mitochondrial.